Consider the following 336-residue polypeptide: UDP-3-O-acylglucosamine N-acyltransferase (336 aa).

Residue His233 is the Proton acceptor of the active site.

It belongs to the transferase hexapeptide repeat family. LpxD subfamily. As to quaternary structure, homotrimer.

The catalysed reaction is a UDP-3-O-[(3R)-3-hydroxyacyl]-alpha-D-glucosamine + a (3R)-hydroxyacyl-[ACP] = a UDP-2-N,3-O-bis[(3R)-3-hydroxyacyl]-alpha-D-glucosamine + holo-[ACP] + H(+). It functions in the pathway bacterial outer membrane biogenesis; LPS lipid A biosynthesis. Functionally, catalyzes the N-acylation of UDP-3-O-acylglucosamine using 3-hydroxyacyl-ACP as the acyl donor. Is involved in the biosynthesis of lipid A, a phosphorylated glycolipid that anchors the lipopolysaccharide to the outer membrane of the cell. This chain is UDP-3-O-acylglucosamine N-acyltransferase, found in Helicobacter pylori (strain ATCC 700392 / 26695) (Campylobacter pylori).